The chain runs to 428 residues: UDP-N-acetylglucosamine 1-carboxyvinyltransferase 2 (428 aa).

22 to 23 (KN) contributes to the phosphoenolpyruvate binding site. UDP-N-acetyl-alpha-D-glucosamine is bound at residue R92. C116 functions as the Proton donor in the catalytic mechanism. C116 carries the 2-(S-cysteinyl)pyruvic acid O-phosphothioketal modification. UDP-N-acetyl-alpha-D-glucosamine-binding positions include 121–125 (RPIDQ), D304, and I326.

The protein belongs to the EPSP synthase family. MurA subfamily.

It is found in the cytoplasm. It carries out the reaction phosphoenolpyruvate + UDP-N-acetyl-alpha-D-glucosamine = UDP-N-acetyl-3-O-(1-carboxyvinyl)-alpha-D-glucosamine + phosphate. It participates in cell wall biogenesis; peptidoglycan biosynthesis. Cell wall formation. Adds enolpyruvyl to UDP-N-acetylglucosamine. In Shouchella clausii (strain KSM-K16) (Alkalihalobacillus clausii), this protein is UDP-N-acetylglucosamine 1-carboxyvinyltransferase 2.